The chain runs to 118 residues: MARVKRGVIARARHKKILKLAKGYYGARSRVFRVAKQAVIKAGQYAYRDRRQRKRQFRALWIARINAGARVNGLSYSRLIAGLKKASIEIDRKVLADLAVNEKAAFAAIVEKAKAVLA.

The protein belongs to the bacterial ribosomal protein bL20 family.

Its function is as follows. Binds directly to 23S ribosomal RNA and is necessary for the in vitro assembly process of the 50S ribosomal subunit. It is not involved in the protein synthesizing functions of that subunit. The polypeptide is Large ribosomal subunit protein bL20 (Ectopseudomonas mendocina (strain ymp) (Pseudomonas mendocina)).